A 287-amino-acid polypeptide reads, in one-letter code: Large ribosomal subunit protein uL3 (287 aa).

Residues 228–287 form a disordered region; it reads KAPEAKPAKLSKKKQAKELAKAQAANQQTVEAKVDTPVVEPKPTEVKKAAPVVEKKGEDK. The span at 269–287 shows a compositional bias: basic and acidic residues; it reads KPTEVKKAAPVVEKKGEDK.

Belongs to the universal ribosomal protein uL3 family. As to quaternary structure, part of the 50S ribosomal subunit. Forms a cluster with proteins L14 and L19.

Its function is as follows. One of the primary rRNA binding proteins, it binds directly near the 3'-end of the 23S rRNA, where it nucleates assembly of the 50S subunit. In Mycoplasma pneumoniae (strain ATCC 29342 / M129 / Subtype 1) (Mycoplasmoides pneumoniae), this protein is Large ribosomal subunit protein uL3.